We begin with the raw amino-acid sequence, 2326 residues long: MARLGNDVPACYGGSPAGGGRGANRHAGPQAGQRGMYGSKSLAQRARTMALYNPIPVRQNCLTVNRSLFIFSEDNIIRKYAKRITEWPPFEYMILATIIANCIVLALEQHLPDGDKTPMSERLDDTEPYFIGIFCFEAGIKIIALGFAFHKGSYLRNGWNVMDFVVVLTGILTTIGTDFDLRTLRAVRVLRPLKLVSGIPSLQVVLKSIMKAMVPLLQIGLLLFFAILMFAIIGLEFYMGKFHKTCFSEETNEPVEEFPCGTKYPSRLCPNGTVCKGYWNGPNFGITNFDNILFAVLTVFQCITMEGWTDMLYTANDALGNTWNWLYFIPLIVIGSFFMLNLVLGVLSGEFAKERERVENRRAFLKLRRQQQVEQEFNRYLRWIHIAEEVMLAEEDKNAEDKCALDVLKRATTKKSKNDLINAEEGEDHFTDISSVGFNRPSLKSVKNERSSYFRRKEKRFRFFIRRMVKSQSFYWIVLCLVGLNTLCVAIVHYDQPPLLTDALYFAEFVFLGLFLTEMSLKMYGLGPRNYFHSSFNCFDFGVIVGSIFEVVWTAVKPDTSFGISVLRALRLLRIFKVTKYWNSLRNLVVSLLNSMKSIISLLFLLFLFIVVFALLGMQLFGGQFNFEDGTPPTNFDTFPAAILTVFQILTGEDWNEVMYYGIEAHGGVKKGMFSSVYFIILTLFGNYTLLNVFLAIAVDNLANAQELTKDEEEMEEANIQKNTIQKAMEVADVSPISATNLSIAAKDQQKSFKSMSIWEQRTSQLRRQHILTSQEALFNELDDEQRRMYVSSHQIRPDMKTHLDRPLVVEPRNSTRKSADKVCPSDCQEGEQERLVQPESCEAPRRSHRHRDKLGEQDKGDGALDTGEPRANSKDDKRCSHRSHSKETEKERDEKGRKGERSRSHEGGRRHHHAQSSLDDAPEREHRRHRSHRHGTEQQHREANGTKGERHSRAKDGSRSGGREGEAVSRSHHAEGAERRRKHRQKVASTNESEEKREIGEKERETVLRERRVHRVKETQPSQDSGTQGNVSLPPIGLQHLPQQPEDADNQKNIKLVTLPTGDAQNPATVNIPVTVTTPAAEMTLLPINNVAVDLENVMKPEEKKAENGDDLNEDGPRQIPPFNSMFLFSTTNPVRRACHYIVNLRYFEMCILLVITMSSIALAAEDPVQGDAPRNNVLKYLDYVFTGVFTFEMVIKMINLGLILHPGSYFRDLWNILDFIVVSGALVAFAFTGSRGKDLNTIKSLRVLRVLRPLKTIKRLPKLKAVFDCVVNSLKNVLNILIVYMLFMFIFAVIAVQLFKGKFFYCTDESKDLEKDCRGQYLVYDNDEIEAEPREWKKCDFHYDNVLWALLTLFTVSTGEGWPTVLKNSIDATEEDQGPSPSYRMEMSIFYVVYFVVFPFFFVNIFVALIIITFQEQGDKVMSDCSLEKNERACIDFAISAKPLTRYMPQNKQTFQYKMWKFVVSPPFEYLIMALIALNTIVLMMKFYNAPDPYDRMLQYLNILFTFLFSMECVLKLIGFGVLNYFRDAWNVFDFVTVLGSITDILVTELADSFINLSFLRLFRAARLIKLLRQGYTIRILLWTFVQSFKALPYVCLLIAMLFFIYAIIGMQVFGNIELDDDGAINRHNNFRTFLQAVMLLLRSATGEGWQEIMLACLNQSPCDARSGIDGDECGSNFAYFYFVSFIFFSSFLMLNLFVAVIMDNFEYLTRDSSILGPHHLDEFIRVWAEYDPGARGRITYNDMYEMLRHMCPPLGLGKKCPARVAYKRLVRMNMPIAEDGSVHFTSTLMALIRTALDVKISPGGAYQQQCDAELRKEITAVWPNLSQKFLDILVPPQRASELTVGKVYAALMIYDYYKQNKSKKVQQQQQLSGLSQTRKSFFQRVVGVLAATQEEPSSYSTSHKNSVNPLYQGGRQKEPFSWLRSRDTCAEGKKEVPESHPEEAGVTKSSSQAVEMREMGSDLNHADQSSLENYGRAASMPRLTAETQKISRPSGRVRAPIADTSPMKRSVSTLTPQRSHVMPDYSLERVIPVQMPHHHHHHHRCHHRREKKQRSLERATNRHADEEAGQLDAQLRDQSSKERERGRSQERRPPSSAEKQRYYSCDRYGSREPPQPRSTDHSRSASPSTGTEQGFHRQGSGSVNDSPLQSASGSSTPSRGRRQLPRTPLTPRPSVTYKTANSSPAHFGNLHDALPPSSPGRLSRGQSEHNHLLSGESQNRPYAGGDSRQPMGTRISSDPYLGFRSSCGSEDLELLEETLTFEVAVAATTATGRSPRTSSFTTQPPQSRRVPNGYHCNLGRSTGPSTAASKRKYYRETDEDDWC.

The Cytoplasmic segment spans residues 1 to 83 (MARLGNDVPA…DNIIRKYAKR (83 aa)). A disordered region spans residues 17 to 37 (AGGGRGANRHAGPQAGQRGMY). The stretch at 75-351 (NIIRKYAKRI…LVLGVLSGEF (277 aa)) is one I repeat. Residues 84 to 107 (ITEWPPFEYMILATIIANCIVLAL) form a helical membrane-spanning segment. Residues 108–124 (EQHLPDGDKTPMSERLD) lie on the Extracellular side of the membrane. The helical transmembrane segment at 125-145 (DTEPYFIGIFCFEAGIKIIAL) threads the bilayer. Topologically, residues 146–156 (GFAFHKGSYLR) are cytoplasmic. Residues 157-175 (NGWNVMDFVVVLTGILTTI) form a helical membrane-spanning segment. The Extracellular portion of the chain corresponds to 176-180 (GTDFD). Residues 181 to 204 (LRTLRAVRVLRPLKLVSGIPSLQV) form a helical membrane-spanning segment. The Cytoplasmic portion of the chain corresponds to 205 to 214 (VLKSIMKAMV). The chain crosses the membrane as a helical span at residues 215–237 (PLLQIGLLLFFAILMFAIIGLEF). Over 238-323 (YMGKFHKTCF…TANDALGNTW (86 aa)) the chain is Extracellular. Asparagine 271 carries N-linked (GlcNAc...) asparagine glycosylation. A helical membrane pass occupies residues 324–348 (NWLYFIPLIVIGSFFMLNLVLGVLS). Residues 349–472 (GEFAKERERV…FFIRRMVKSQ (124 aa)) lie on the Cytoplasmic side of the membrane. Positions 371–388 (QQVEQEFNRYLRWIHIAE) are binding to the beta subunit. The stretch at 458 to 702 (EKRFRFFIRR…VFLAIAVDNL (245 aa)) is one II repeat. A helical transmembrane segment spans residues 473–491 (SFYWIVLCLVGLNTLCVAI). Residues 492-501 (VHYDQPPLLT) are Extracellular-facing. A helical transmembrane segment spans residues 502-524 (DALYFAEFVFLGLFLTEMSLKMY). At 525 to 534 (GLGPRNYFHS) the chain is on the cytoplasmic side. Residue serine 534 participates in a 1,2-diacyl-sn-glycero-3-phospho-(1D-myo-inositol-4,5-bisphosphate) binding. A helical membrane pass occupies residues 535-556 (SFNCFDFGVIVGSIFEVVWTAV). The Extracellular portion of the chain corresponds to 557-563 (KPDTSFG). The chain crosses the membrane as a helical span at residues 564–576 (ISVLRALRLLRIF). A 1,2-diacyl-sn-glycero-3-phospho-(1D-myo-inositol-4,5-bisphosphate)-binding residues include arginine 574 and lysine 577. The Cytoplasmic segment spans residues 577–594 (KVTKYWNSLRNLVVSLLN). The helical transmembrane segment at 595-620 (SMKSIISLLFLLFLFIVVFALLGMQL) threads the bilayer. Residues 621 to 672 (FGGQFNFEDGTPPTNFDTFPAAILTVFQILTGEDWNEVMYYGIEAHGGVKKG) lie on the Extracellular side of the membrane. Residues 673 to 699 (MFSSVYFIILTLFGNYTLLNVFLAIAV) traverse the membrane as a helical segment. Over 700–1148 (DNLANAQELT…ACHYIVNLRY (449 aa)) the chain is Cytoplasmic. The segment at 793–1048 (SHQIRPDMKT…LQHLPQQPED (256 aa)) is disordered. Composition is skewed to basic and acidic residues over residues 796–808 (IRPD…DRPL), 854–879 (KLGE…DDKR), 886–908 (SKET…SHEG), 935–979 (HGTE…EGAE), and 994–1011 (SEEK…VLRE). Polar residues predominate over residues 1020–1032 (TQPSQDSGTQGNV). An III repeat occupies 1134 to 1416 (NPVRRACHYI…IFVALIIITF (283 aa)). The chain crosses the membrane as a helical span at residues 1149-1167 (FEMCILLVITMSSIALAAE). The Extracellular segment spans residues 1168 to 1175 (DPVQGDAP). Residues 1176-1200 (RNNVLKYLDYVFTGVFTFEMVIKMI) traverse the membrane as a helical segment. Residues 1201–1214 (NLGLILHPGSYFRD) lie on the Cytoplasmic side of the membrane. A helical membrane pass occupies residues 1215-1235 (LWNILDFIVVSGALVAFAFTG). The Extracellular segment spans residues 1236–1241 (SRGKDL). A helical membrane pass occupies residues 1242–1262 (NTIKSLRVLRVLRPLKTIKRL). The Cytoplasmic segment spans residues 1263 to 1280 (PKLKAVFDCVVNSLKNVL). The helical transmembrane segment at 1281–1300 (NILIVYMLFMFIFAVIAVQL) threads the bilayer. Topologically, residues 1301–1387 (FKGKFFYCTD…DQGPSPSYRM (87 aa)) are extracellular. Residues 1388–1413 (EMSIFYVVYFVVFPFFFVNIFVALII) traverse the membrane as a helical segment. Residues 1414-1468 (ITFQEQGDKVMSDCSLEKNERACIDFAISAKPLTRYMPQNKQTFQYKMWKFVVSP) are Cytoplasmic-facing. The stretch at 1453–1708 (NKQTFQYKMW…LFVAVIMDNF (256 aa)) is one IV repeat. Residues 1469–1487 (PFEYLIMALIALNTIVLMM) form a helical membrane-spanning segment. Residues 1488-1495 (KFYNAPDP) are Extracellular-facing. A helical transmembrane segment spans residues 1496–1520 (YDRMLQYLNILFTFLFSMECVLKLI). Topologically, residues 1521–1530 (GFGVLNYFRD) are cytoplasmic. The helical transmembrane segment at 1531–1552 (AWNVFDFVTVLGSITDILVTEL) threads the bilayer. The Extracellular portion of the chain corresponds to 1553–1558 (ADSFIN). A glycan (N-linked (GlcNAc...) asparagine) is linked at asparagine 1558. A helical membrane pass occupies residues 1559–1577 (LSFLRLFRAARLIKLLRQG). Residues 1578–1596 (YTIRILLWTFVQSFKALPY) lie on the Cytoplasmic side of the membrane. A helical transmembrane segment spans residues 1597 to 1616 (VCLLIAMLFFIYAIIGMQVF). Residues 1617–1680 (GNIELDDDGA…IDGDECGSNF (64 aa)) lie on the Extracellular side of the membrane. The helical transmembrane segment at 1681 to 1704 (AYFYFVSFIFFSSFLMLNLFVAVI) threads the bilayer. The Cytoplasmic portion of the chain corresponds to 1705–2326 (MDNFEYLTRD…YRETDEDDWC (622 aa)). The 36-residue stretch at 1721–1756 (HHLDEFIRVWAEYDPGARGRITYNDMYEMLRHMCPP) folds into the EF-hand domain. Positions 1734, 1740, and 1745 each coordinate Ca(2+). Polar residues predominate over residues 1897–1912 (EEPSSYSTSHKNSVNP). Disordered regions lie at residues 1897–1916 (EEPS…LYQG), 1932–1954 (CAEG…KSSS), 2039–2242 (PHHH…SSDP), and 2271–2326 (TTAT…DDWC). The segment covering 1932–1948 (CAEGKKEVPESHPEEAG) has biased composition (basic and acidic residues). The span at 2039–2055 (PHHHHHHHRCHHRREKK) shows a compositional bias: basic residues. 2 stretches are compositionally biased toward basic and acidic residues: residues 2056–2069 (QRSL…HADE) and 2077–2104 (QLRD…EKQR). Composition is skewed to polar residues over residues 2142-2161 (GSGS…STPS), 2275-2289 (GRSP…QPPQ), and 2302-2311 (GRSTGPSTAA).

This sequence belongs to the calcium channel alpha-1 subunit (TC 1.A.1.11) family. As to quaternary structure, multisubunit complex consisting of alpha-1, alpha-2, beta and delta subunits in a 1:1:1:1 ratio. The channel activity is directed by the pore-forming and voltage-sensitive alpha-1 subunit. In many cases, this subunit is sufficient to generate voltage-sensitive calcium channel activity. The auxiliary subunits beta and alpha-2/delta linked by a disulfide bridge regulate the channel activity. In terms of processing, phosphorylated in vitro by CaM-kinase II, PKA, PKC and CGPK. In terms of tissue distribution, expression is higher in the electric lobe than in the forebrain.

It localises to the membrane. Its function is as follows. The isoform alpha-1B gives rise to N-type calcium currents. N-type calcium channels belong to the 'high-voltage activated' (HVA) group. The sequence is that of Probable voltage-dependent N-type calcium channel subunit alpha-1B from Diplobatis ommata (Ocellated electric ray).